A 136-amino-acid polypeptide reads, in one-letter code: Histone H3.3C-like (136 aa).

R3 is modified (asymmetric dimethylarginine; by PRMT6; alternate). R3 is modified (citrulline; alternate). T4 is subject to Phosphothreonine; by HASPIN. The residue at position 5 (K5) is an Allysine; alternate. K5 is subject to N6,N6,N6-trimethyllysine; alternate. K5 bears the N6,N6-dimethyllysine; alternate mark. K5 is subject to N6-(2-hydroxyisobutyryl)lysine; alternate. N6-(beta-hydroxybutyryl)lysine; alternate is present on K5. At K5 the chain carries N6-acetyllysine; alternate. K5 is modified (N6-methyllysine; alternate). At T7 the chain carries Phosphothreonine; by PKC. N6,N6,N6-trimethyllysine; alternate is present on K10. At K10 the chain carries N6,N6-dimethyllysine; alternate. K10 is modified (N6-(2-hydroxyisobutyryl)lysine; alternate). N6-acetyllysine; alternate is present on K10. K10 carries the N6-methyllysine; alternate modification. S11 bears the ADP-ribosylserine; alternate mark. S11 is modified (phosphoserine; alternate; by AURKB, AURKC, RPS6KA3, RPS6KA4 and RPS6KA5). Phosphothreonine; by PKC is present on T12. The residue at position 15 (K15) is an N6-(2-hydroxyisobutyryl)lysine; alternate. K15 bears the N6-(beta-hydroxybutyryl)lysine; alternate mark. K15 bears the N6-acetyllysine; alternate mark. K15 is subject to N6-glutaryllysine; alternate. K15 carries the post-translational modification N6-succinyllysine; alternate. Position 18 is a citrulline; alternate (R18). Residue R18 is modified to Asymmetric dimethylarginine; by CARM1; alternate. N6-(2-hydroxyisobutyryl)lysine; alternate is present on residues K19 and K28. K19 carries the N6-(beta-hydroxybutyryl)lysine; alternate modification. Residues K19 and K28 each carry the N6-acetyllysine; alternate modification. N6-methyllysine; alternate is present on residues K19 and K28. 2 positions are modified to N6-glutaryllysine; alternate: K19 and K28. An N6-butyryllysine; alternate modification is found at K19. K28 carries the N6,N6,N6-trimethyllysine; alternate modification. Residue K28 is modified to N6,N6-dimethyllysine; alternate. S29 bears the ADP-ribosylserine; alternate mark. At S29 the chain carries Phosphoserine; alternate; by AURKB, AURKC and RPS6KA5. Phosphoserine is present on S32. An N6-methyllysine modification is found at K38. A Phosphotyrosine modification is found at Y42. The residue at position 57 (K57) is an N6,N6,N6-trimethyllysine; alternate. K57 is subject to N6-(2-hydroxyisobutyryl)lysine; alternate. N6-(beta-hydroxybutyryl)lysine; alternate is present on K57. Residue K57 is modified to N6-acetyllysine; alternate. K57 carries the N6-glutaryllysine; alternate modification. The residue at position 57 (K57) is an N6-succinyllysine; alternate. N6-methyllysine; by EHMT2; alternate is present on K57. S58 bears the Phosphoserine mark. N6-(2-hydroxyisobutyryl)lysine; alternate occurs at positions 65 and 80. N6-methyllysine; alternate is present on residues K65 and K80. Position 80 is an N6,N6,N6-trimethyllysine; alternate (K80). Residue K80 is modified to N6,N6-dimethyllysine; alternate. K80 carries the N6-acetyllysine; alternate modification. The residue at position 80 (K80) is an N6-glutaryllysine; alternate. K80 bears the N6-succinyllysine; alternate mark. T81 is subject to Phosphothreonine. Residue S87 is modified to Phosphoserine.

This sequence belongs to the histone H3 family. The nucleosome is a histone octamer containing two molecules each of H2A, H2B, H3 and H4 assembled in one H3-H4 heterotetramer and two H2A-H2B heterodimers. The octamer wraps approximately 147 bp of DNA. Post-translationally, acetylation is generally linked to gene activation. Acetylation on Lys-19 favors methylation at Arg-18. Citrullination at Arg-18 by PADI4 impairs methylation and represses transcription. In terms of processing, asymmetric dimethylation at Arg-18 (H3R17me2a) by CARM1 is linked to gene activation. Asymmetric dimethylation at Arg-3 (H3R2me2a) by PRMT6 is linked to gene repression and is mutually exclusive with H3 Lys-5 methylation (H3K4me2 and H3K4me3). H3R2me2a is present at the 3' of genes regardless of their transcription state and is enriched on inactive promoters, while it is absent on active promoters. Post-translationally, methylation at Lys-5 (H3K4me) and Lys-80 (H3K79me) are linked to gene activation. Methylation at Lys-5 (H3K4me) facilitates subsequent acetylation of H3 and H4. Methylation at Lys-80 (H3K79me) is associated with DNA double-strand break (DSB) responses and is a specific target for TP53BP1. Methylation at Lys-10 (H3K9me) and Lys-28 (H3K27me) are linked to gene repression. Methylation at Lys-10 (H3K9me) is a specific target for HP1 proteins (CBX1, CBX3 and CBX5) and prevents subsequent phosphorylation at Ser-11 (H3S10ph) and acetylation of H3 and H4. Methylation at Lys-5 (H3K4me) and Lys-80 (H3K79me) require preliminary monoubiquitination of H2B at 'Lys-120'. Methylation at Lys-10 (H3K9me) and Lys-28 (H3K27me) are enriched in inactive X chromosome chromatin. Monomethylation at Lys-57 (H3K56me1) by EHMT2/G9A in G1 phase promotes interaction with PCNA and is required for DNA replication. Phosphorylated at Thr-4 (H3T3ph) by HASPIN during prophase and dephosphorylated during anaphase. Phosphorylation at Ser-11 (H3S10ph) by AURKB is crucial for chromosome condensation and cell-cycle progression during mitosis and meiosis. In addition phosphorylation at Ser-11 (H3S10ph) by RPS6KA4 and RPS6KA5 is important during interphase because it enables the transcription of genes following external stimulation, like mitogens, stress, growth factors or UV irradiation and result in the activation of genes, such as c-fos and c-jun. Phosphorylation at Ser-11 (H3S10ph), which is linked to gene activation, prevents methylation at Lys-10 (H3K9me) but facilitates acetylation of H3 and H4. Phosphorylation at Ser-11 (H3S10ph) by AURKB mediates the dissociation of HP1 proteins (CBX1, CBX3 and CBX5) from heterochromatin. Phosphorylation at Ser-11 (H3S10ph) is also an essential regulatory mechanism for neoplastic cell transformation. Phosphorylated at Ser-29 (H3S28ph) by MAP3K20 isoform 1, RPS6KA5 or AURKB during mitosis or upon ultraviolet B irradiation. Phosphorylation at Thr-7 (H3T6ph) by PRKCB is a specific tag for epigenetic transcriptional activation that prevents demethylation of Lys-5 (H3K4me) by LSD1/KDM1A. At centromeres, specifically phosphorylated at Thr-12 (H3T11ph) from prophase to early anaphase, by DAPK3 and PKN1. Phosphorylation at Thr-12 (H3T11ph) by PKN1 or isoform M2 of PKM (PKM2) is a specific tag for epigenetic transcriptional activation that promotes demethylation of Lys-10 (H3K9me) by KDM4C/JMJD2C. Phosphorylation at Tyr-42 (H3Y41ph) by JAK2 promotes exclusion of CBX5 (HP1 alpha) from chromatin. In terms of processing, lysine deamination at Lys-5 (H3K4all) to form allysine is mediated by LOXL2. Allysine formation by LOXL2 only takes place on H3K4me3 and results in gene repression. Post-translationally, butyrylation of histones marks active promoters and competes with histone acetylation. It is present during late spermatogenesis. Succinylation at Lys-80 (H3K79succ) by KAT2A takes place with a maximum frequency around the transcription start sites of genes. It gives a specific tag for epigenetic transcription activation. In terms of processing, serine ADP-ribosylation constitutes the primary form of ADP-ribosylation of proteins in response to DNA damage. Serine ADP-ribosylation at Ser-11 (H3S10ADPr) is mutually exclusive with phosphorylation at Ser-11 (H3S10ph) and impairs acetylation at Lys-10 (H3K9ac).

It localises to the nucleus. The protein localises to the chromosome. Functionally, core component of nucleosome. Nucleosomes wrap and compact DNA into chromatin, limiting DNA accessibility to the cellular machineries which require DNA as a template. Histones thereby play a central role in transcription regulation, DNA repair, DNA replication and chromosomal stability. DNA accessibility is regulated via a complex set of post-translational modifications of histones, also called histone code, and nucleosome remodeling. The sequence is that of Histone H3.3C-like from Bos taurus (Bovine).